A 172-amino-acid polypeptide reads, in one-letter code: C-phycocyanin beta chain (172 aa).

Asparagine 72 carries the N4-methylasparagine modification. (2R,3E)-phycocyanobilin is bound by residues cysteine 82 and cysteine 153.

This sequence belongs to the phycobiliprotein family. As to quaternary structure, heterodimer of an alpha and a beta subunit, which further assembles into trimers and the trimers into hexamers. The basic functional unit of phycobiliproteins is a ring-shaped hexamer formed from two back-to-back trimers contacting via the alpha chain subunits. The trimers are composed of alpha/beta subunit heterodimers arranged around a three-fold axis of symmetry. The phycoerythrins also contain a gamma subunit which is located in the center of the hexamer. In terms of processing, contains two covalently linked bilin chromophores.

The protein localises to the plastid. It is found in the chloroplast thylakoid membrane. Functionally, light-harvesting photosynthetic bile pigment-protein from the phycobiliprotein complex (phycobilisome, PBS). Phycocyanin is the major phycobiliprotein in the PBS rod. The sequence is that of C-phycocyanin beta chain (cpcB) from Pyropia yezoensis (Susabi-nori).